Reading from the N-terminus, the 1053-residue chain is Focal adhesion kinase 1 (1053 aa).

The disordered stretch occupies residues 1–27; that stretch reads MAAAYLDPNLNHTPSSSAKTHLGTGME. Residues 10–19 show a composition bias toward polar residues; the sequence is LNHTPSSSAK. Residues 35–355 form the FERM domain; sequence RVLKVFHYFE…GYCRLVNGAT (321 aa). The residue at position 397 (Tyr397) is a Phosphotyrosine; by autocatalysis. Tyr407 carries the post-translational modification Phosphotyrosine. In terms of domain architecture, Protein kinase spans 422–680; sequence IELGRCIGEG…ELKAQLSTIL (259 aa). Residues 428 to 434, Lys454, and 500 to 502 contribute to the ATP site; these read IGEGQFG and ELC. Residue Asp546 is the Proton acceptor of the active site. 2 positions are modified to phosphotyrosine; by SRC: Tyr576 and Tyr577. The segment covering 686-697 has biased composition (basic and acidic residues); the sequence is QQEERMRMESRR. Disordered stretches follow at residues 686 to 741 and 843 to 892; these read QQEE…QPNH and RGSI…LASL. A Phosphotyrosine modification is found at Tyr863. A Phosphoserine modification is found at Ser911. Tyr926 bears the Phosphotyrosine mark.

This sequence belongs to the protein kinase superfamily. Tyr protein kinase family. FAK subfamily. As to quaternary structure, interacts with ARHGAP26, GRB7, DCC, PIK3R1, PXN and SRC. Interacts with the ARP2/3 complex. Phosphorylated on tyrosine residues upon activation, e.g. upon integrin signaling. Tyr-397 is the major autophosphorylation site, but other kinases can also phosphorylate this residue. Phosphorylation at Tyr-397 promotes interaction with SRC and SRC family members, leading to phosphorylation at Tyr-576, Tyr-577 and at additional tyrosine residues. Isoform 2 is phosphorylated on serine or threonine residues, but apparently not on tyrosine residues.

Its subcellular location is the cell junction. The protein resides in the focal adhesion. The protein localises to the cell membrane. It localises to the cytoplasm. It is found in the perinuclear region. Its subcellular location is the cell cortex. The protein resides in the cytoskeleton. The protein localises to the microtubule organizing center. It localises to the centrosome. It is found in the nucleus. Its subcellular location is the cilium basal body. The enzyme catalyses L-tyrosyl-[protein] + ATP = O-phospho-L-tyrosyl-[protein] + ADP + H(+). With respect to regulation, subject to autoinhibition, mediated by interactions between the FERM domain and the kinase domain. Activated by autophosphorylation at Tyr-397. This promotes interaction with SRC and phosphorylation at Tyr-576 and Tyr-577 in the kinase activation loop. Phosphorylation at Tyr-576 and Tyr-577 is required for maximal kinase activity. Inhibited by TAE226. Non-receptor protein-tyrosine kinase that plays an essential role in regulating cell migration, adhesion, spreading, reorganization of the actin cytoskeleton, formation and disassembly of focal adhesions and cell protrusions, cell cycle progression, cell proliferation and apoptosis. Required for early embryonic development, embryonic angiogenesis, normal cardiomyocyte migration and proliferation, and normal heart development. Regulates axon growth and neuronal cell migration, axon branching and synapse formation; required for normal development of the nervous system. Plays a role in osteogenesis and differentiation of osteoblasts. Functions in integrin signal transduction, but also in signaling downstream of numerous growth factor receptors, G-protein coupled receptors (GPCR), ephrin receptors, netrin receptors and LDL receptors. Forms multisubunit signaling complexes with SRC and SRC family members upon activation; this leads to the phosphorylation of additional tyrosine residues, creating binding sites for scaffold proteins, effectors and substrates. Regulates numerous signaling pathways. Promotes activation of phosphatidylinositol 3-kinase and the AKT1 signaling cascade. Promotes activation of MAPK1/ERK2, MAPK3/ERK1 and the MAP kinase signaling cascade. Promotes localized and transient activation of guanine nucleotide exchange factors (GEFs) and GTPase-activating proteins (GAPs), and thereby modulates the activity of Rho family GTPases. Signaling via CAS family members mediates activation of RAC1. Regulates P53/TP53 activity and stability. Phosphorylates SRC; this increases SRC kinase activity. Isoform 2 (FRNK) does not contain a kinase domain and inhibits PTK2/FAK1 phosphorylation and signaling. In Gallus gallus (Chicken), this protein is Focal adhesion kinase 1 (PTK2).